The primary structure comprises 205 residues: Cerebellin-3 (205 aa).

The N-terminal stretch at 1 to 32 is a signal peptide; sequence MLGAKPHWLPGPLHSPGLPLVLVLLALGAGWA. The region spanning 67–205 is the C1q domain; that stretch reads APPGRVAFAA…SFSGFLIFPL (139 aa). The tract at residues 72–205 is necessary for interaction with CBLN3, and homotrimerization; it reads VAFAAVRSHH…SFSGFLIFPL (134 aa). N-linked (GlcNAc...) asparagine glycosylation is present at Asn90.

Heterohexamer; disulfide-linked heterotrimers. Interacts with CBLN1. May also form oligomers with CBLN2 and CBLN4.

Its subcellular location is the endoplasmic reticulum. The protein localises to the golgi apparatus. It is found in the cis-Golgi network. It localises to the secreted. The protein resides in the synapse. Functionally, may be involved in synaptic functions in the CNS. The chain is Cerebellin-3 (CBLN3) from Homo sapiens (Human).